Here is a 141-residue protein sequence, read N- to C-terminus: Putative pre-16S rRNA nuclease (141 aa).

It belongs to the YqgF nuclease family.

It localises to the cytoplasm. Its function is as follows. Could be a nuclease involved in processing of the 5'-end of pre-16S rRNA. This Amoebophilus asiaticus (strain 5a2) protein is Putative pre-16S rRNA nuclease.